The following is a 412-amino-acid chain: Peptidase T (412 aa).

A Zn(2+)-binding site is contributed by His-81. Asp-83 is an active-site residue. Asp-144 is a binding site for Zn(2+). Glu-178 serves as the catalytic Proton acceptor. Zn(2+)-binding residues include Glu-179, Asp-201, and His-383.

It belongs to the peptidase M20B family. The cofactor is Zn(2+).

The protein localises to the cytoplasm. It catalyses the reaction Release of the N-terminal residue from a tripeptide.. Its function is as follows. Cleaves the N-terminal amino acid of tripeptides. The chain is Peptidase T from Bacillus cereus (strain Q1).